The chain runs to 207 residues: Ribonuclease HII (207 aa).

Residues 20–207 (QLFAGVDEVG…KPVKRVLGIE (188 aa)) enclose the RNase H type-2 domain. A divalent metal cation-binding residues include D26, E27, and D118.

The protein belongs to the RNase HII family. Requires Mn(2+) as cofactor. It depends on Mg(2+) as a cofactor.

The protein localises to the cytoplasm. The enzyme catalyses Endonucleolytic cleavage to 5'-phosphomonoester.. Endonuclease that specifically degrades the RNA of RNA-DNA hybrids. This is Ribonuclease HII from Aliivibrio salmonicida (strain LFI1238) (Vibrio salmonicida (strain LFI1238)).